A 155-amino-acid polypeptide reads, in one-letter code: Ribosomal RNA large subunit methyltransferase H (155 aa).

S-adenosyl-L-methionine is bound by residues leucine 72, glycine 103, and 122 to 127 (LSDLTL).

The protein belongs to the RNA methyltransferase RlmH family. In terms of assembly, homodimer.

Its subcellular location is the cytoplasm. The catalysed reaction is pseudouridine(1915) in 23S rRNA + S-adenosyl-L-methionine = N(3)-methylpseudouridine(1915) in 23S rRNA + S-adenosyl-L-homocysteine + H(+). Its function is as follows. Specifically methylates the pseudouridine at position 1915 (m3Psi1915) in 23S rRNA. The polypeptide is Ribosomal RNA large subunit methyltransferase H (Verminephrobacter eiseniae (strain EF01-2)).